Here is a 127-residue protein sequence, read N- to C-terminus: Fluoride-specific ion channel FluC (127 aa).

4 helical membrane-spanning segments follow: residues 4-24 (SLLA…GLGM), 35-55 (PGTL…IAFF), 68-88 (LLIT…AEVV), and 96-116 (ILWA…MTAA). Residues G75 and T78 each coordinate Na(+).

Belongs to the fluoride channel Fluc/FEX (TC 1.A.43) family.

It localises to the cell inner membrane. It carries out the reaction fluoride(in) = fluoride(out). With respect to regulation, na(+) is not transported, but it plays an essential structural role and its presence is essential for fluoride channel function. Fluoride-specific ion channel. Important for reducing fluoride concentration in the cell, thus reducing its toxicity. The sequence is that of Fluoride-specific ion channel FluC from Pseudomonas putida (strain W619).